A 144-amino-acid polypeptide reads, in one-letter code: Acylphosphatase-like protein MJ1331 (144 aa).

Residues 8–100 (TYELRIYGNV…FPNGLNKIST (93 aa)) enclose the Acylphosphatase-like domain.

This chain is Acylphosphatase-like protein MJ1331, found in Methanocaldococcus jannaschii (strain ATCC 43067 / DSM 2661 / JAL-1 / JCM 10045 / NBRC 100440) (Methanococcus jannaschii).